Consider the following 199-residue polypeptide: Copper transport protein CTR4 (199 aa).

Transmembrane regions (helical) follow at residues 62–82 and 152–172; these read KGMF…IELI and AFFV…FIFL.

Belongs to the copper transporter (Ctr) (TC 1.A.56) family. SLC31A subfamily.

It is found in the membrane. Functionally, required for high affinity copper (probably reduced Cu I) transport into the cell. Plays a role in fungal pathogenesis during host infection. This chain is Copper transport protein CTR4, found in Cryptococcus neoformans var. grubii serotype A (strain H99 / ATCC 208821 / CBS 10515 / FGSC 9487) (Filobasidiella neoformans var. grubii).